The sequence spans 161 residues: Nucleotide-binding protein XCV3791 (161 aa).

Belongs to the YajQ family.

Nucleotide-binding protein. This Xanthomonas euvesicatoria pv. vesicatoria (strain 85-10) (Xanthomonas campestris pv. vesicatoria) protein is Nucleotide-binding protein XCV3791.